Here is a 622-residue protein sequence, read N- to C-terminus: Condensin-2 complex subunit H2 (622 aa).

The residue at position 19 (Thr-19) is a Phosphothreonine. Residues Ser-95, Ser-199, Ser-223, and Ser-227 each carry the phosphoserine modification. Positions 207 to 354 (WNPKEPGRAE…PGQKRKRKGA (148 aa)) are disordered. Residues 262-273 (AAEPPEASAPEV) show a composition bias toward low complexity. Ser-282 is modified (phosphoserine). Residues 294 to 312 (TLRERKEAPEPASRLKDTP) show a composition bias toward basic and acidic residues.

It belongs to the CND2 H2 (condensin-2 subunit 2) family. In terms of assembly, component of the condensin-2 complex, which contains the SMC2 and SMC4 heterodimer, and three non SMC subunits, NCAPG2, NCAPH2 and NCAPD3 that probably regulate the complex.

The protein resides in the nucleus. In terms of biological role, regulatory subunit of the condensin-2 complex, a complex that seems to provide chromosomes with an additional level of organization and rigidity and in establishing mitotic chromosome architecture. May promote the resolution of double-strand DNA catenanes (intertwines) between sister chromatids. Condensin-mediated compaction likely increases tension in catenated sister chromatids, providing directionality for type II topoisomerase-mediated strand exchanges toward chromatid decatenation. Required for decatenation of chromatin bridges at anaphase. Early in neurogenesis, may play an essential role to ensure accurate mitotic chromosome condensation in neuron stem cells, ultimately affecting neuron pool and cortex size. Seems to have lineage-specific role in T-cell development. This is Condensin-2 complex subunit H2 (NCAPH2) from Bos taurus (Bovine).